The chain runs to 70 residues: Large ribosomal subunit protein uL29 (70 aa).

It belongs to the universal ribosomal protein uL29 family.

The sequence is that of Large ribosomal subunit protein uL29 from Prochlorococcus marinus (strain MIT 9313).